Here is a 306-residue protein sequence, read N- to C-terminus: Curved DNA-binding protein (306 aa).

A J domain is found at Asp5–Trp69.

It localises to the cytoplasm. It is found in the nucleoid. DNA-binding protein that preferentially recognizes a curved DNA sequence. It is probably a functional analog of DnaJ; displays overlapping activities with DnaJ, but functions under different conditions, probably acting as a molecular chaperone in an adaptive response to environmental stresses other than heat shock. Lacks autonomous chaperone activity; binds native substrates and targets them for recognition by DnaK. Its activity is inhibited by the binding of CbpM. The chain is Curved DNA-binding protein from Shigella flexneri.